A 675-amino-acid polypeptide reads, in one-letter code: Rho GTPase-activating protein 40 (675 aa).

Disordered regions lie at residues 95 to 118 (RDEL…EAES) and 187 to 218 (KMSS…PGGL). A compositionally biased stretch (acidic residues) spans 103-116 (SGGNEGQLPEEGEA). One can recognise a Rho-GAP domain in the interval 323–522 (VPLDSLLEAD…IMVHYQDLLW (200 aa)).

Its function is as follows. GTPase activator for the Rho-type GTPases by converting them to an inactive GDP-bound state. The protein is Rho GTPase-activating protein 40 of Homo sapiens (Human).